Here is a 446-residue protein sequence, read N- to C-terminus: Exodeoxyribonuclease 7 large subunit (446 aa).

This sequence belongs to the XseA family. Heterooligomer composed of large and small subunits.

The protein localises to the cytoplasm. It carries out the reaction Exonucleolytic cleavage in either 5'- to 3'- or 3'- to 5'-direction to yield nucleoside 5'-phosphates.. Functionally, bidirectionally degrades single-stranded DNA into large acid-insoluble oligonucleotides, which are then degraded further into small acid-soluble oligonucleotides. The sequence is that of Exodeoxyribonuclease 7 large subunit from Streptococcus pyogenes serotype M3 (strain ATCC BAA-595 / MGAS315).